Here is a 339-residue protein sequence, read N- to C-terminus: Ketol-acid reductoisomerase (NADP(+)) (339 aa).

The 182-residue stretch at 1-182 (MRVYYDRDAD…GGGRAGIIET (182 aa)) folds into the KARI N-terminal Rossmann domain. NADP(+) contacts are provided by residues 24–27 (YGSQ), Arg-48, Ser-51, Ser-53, and 83–86 (DELQ). His-108 is an active-site residue. Gly-134 serves as a coordination point for NADP(+). Residues 183–328 (TFKEECETDL…ARLRDMMPWI (146 aa)) enclose the KARI C-terminal knotted domain. Asp-191, Glu-195, Glu-227, and Glu-231 together coordinate Mg(2+). Residue Ser-252 coordinates substrate.

Belongs to the ketol-acid reductoisomerase family. Mg(2+) is required as a cofactor.

The enzyme catalyses (2R)-2,3-dihydroxy-3-methylbutanoate + NADP(+) = (2S)-2-acetolactate + NADPH + H(+). It carries out the reaction (2R,3R)-2,3-dihydroxy-3-methylpentanoate + NADP(+) = (S)-2-ethyl-2-hydroxy-3-oxobutanoate + NADPH + H(+). It functions in the pathway amino-acid biosynthesis; L-isoleucine biosynthesis; L-isoleucine from 2-oxobutanoate: step 2/4. It participates in amino-acid biosynthesis; L-valine biosynthesis; L-valine from pyruvate: step 2/4. Its function is as follows. Involved in the biosynthesis of branched-chain amino acids (BCAA). Catalyzes an alkyl-migration followed by a ketol-acid reduction of (S)-2-acetolactate (S2AL) to yield (R)-2,3-dihydroxy-isovalerate. In the isomerase reaction, S2AL is rearranged via a Mg-dependent methyl migration to produce 3-hydroxy-3-methyl-2-ketobutyrate (HMKB). In the reductase reaction, this 2-ketoacid undergoes a metal-dependent reduction by NADPH to yield (R)-2,3-dihydroxy-isovalerate. In Bradyrhizobium sp. (strain ORS 278), this protein is Ketol-acid reductoisomerase (NADP(+)).